Consider the following 250-residue polypeptide: MENNKEVLKKMVFFVLMKFLGLTILPKGICSTRPKPSQLQRSNLVKTFKIYIFFMRVTLVTHENVKSVDQLLSHDLIYNVSGPNYDKLKTELKNQEMATLFKDKNVDIYGVEYYHLCYLCENAERSACLYGGVTNHEGNHLEIPKKIVVKVSIDGIQSLSFDIEQIKNGNCSRISYTVRKYLTDNKQLYTNGPSKYETGYIKFIPKNKESFWFDFFPEPEFTQSKYLMIYKDNETLDSNTSQIEVYLTTK.

Residues 1-30 (MENNKEVLKKMVFFVLMKFLGLTILPKGIC) form the signal peptide. A disulfide bond links Cys-117 and Cys-128.

The protein belongs to the staphylococcal/streptococcal toxin family.

Causative agent of the symptoms associated with scarlet fever, have been associated with streptococcal toxic shock-like disease and may play a role in the early events of rheumatic fever. This chain is Exotoxin type A (speA), found in Streptococcus pyogenes.